A 186-amino-acid chain; its full sequence is Ribosome-recycling factor (186 aa).

The protein belongs to the RRF family.

The protein localises to the cytoplasm. In terms of biological role, responsible for the release of ribosomes from messenger RNA at the termination of protein biosynthesis. May increase the efficiency of translation by recycling ribosomes from one round of translation to another. The protein is Ribosome-recycling factor of Bacteroides thetaiotaomicron (strain ATCC 29148 / DSM 2079 / JCM 5827 / CCUG 10774 / NCTC 10582 / VPI-5482 / E50).